A 184-amino-acid chain; its full sequence is MADEQLNEKDLNAEEAGAVDNGARVQELEEQLAAAKDQSLRAVADLQNVRRRAEQDVEKAHKFALEKFAGDLLPVIDSLELALAHSSAEDEQVKKIREGVELTLKMFQDTLKRYNLEAIDPHGQPFNAEHHQAMAMQESAEVEPNSVLNVFQKGYLLNGRLLRPAMVVVSKAPSAPQPSIDEKA.

Over residues 1–12 the composition is skewed to basic and acidic residues; sequence MADEQLNEKDLN. The interval 1-22 is disordered; it reads MADEQLNEKDLNAEEAGAVDNG.

This sequence belongs to the GrpE family. Homodimer.

The protein localises to the cytoplasm. Its function is as follows. Participates actively in the response to hyperosmotic and heat shock by preventing the aggregation of stress-denatured proteins, in association with DnaK and GrpE. It is the nucleotide exchange factor for DnaK and may function as a thermosensor. Unfolded proteins bind initially to DnaJ; upon interaction with the DnaJ-bound protein, DnaK hydrolyzes its bound ATP, resulting in the formation of a stable complex. GrpE releases ADP from DnaK; ATP binding to DnaK triggers the release of the substrate protein, thus completing the reaction cycle. Several rounds of ATP-dependent interactions between DnaJ, DnaK and GrpE are required for fully efficient folding. The polypeptide is Protein GrpE (Pseudomonas putida (strain W619)).